The sequence spans 184 residues: dCTP deaminase (184 aa).

DCTP-binding positions include 107-112, 131-133, Gln152, Tyr166, and Gln176; these read KSTYAR and TLE. Glu133 acts as the Proton donor/acceptor in catalysis.

Belongs to the dCTP deaminase family. Homotrimer.

It catalyses the reaction dCTP + H2O + H(+) = dUTP + NH4(+). It participates in pyrimidine metabolism; dUMP biosynthesis; dUMP from dCTP (dUTP route): step 1/2. Catalyzes the deamination of dCTP to dUTP. The chain is dCTP deaminase from Paramagnetospirillum magneticum (strain ATCC 700264 / AMB-1) (Magnetospirillum magneticum).